We begin with the raw amino-acid sequence, 287 residues long: Phosphatidylserine decarboxylase proenzyme (287 aa).

Active-site charge relay system; for autoendoproteolytic cleavage activity residues include Asp86, His143, and Ser250. Ser250 (schiff-base intermediate with substrate; via pyruvic acid; for decarboxylase activity) is an active-site residue. Ser250 is modified (pyruvic acid (Ser); by autocatalysis).

This sequence belongs to the phosphatidylserine decarboxylase family. PSD-B subfamily. Prokaryotic type I sub-subfamily. Heterodimer of a large membrane-associated beta subunit and a small pyruvoyl-containing alpha subunit. Requires pyruvate as cofactor. In terms of processing, is synthesized initially as an inactive proenzyme. Formation of the active enzyme involves a self-maturation process in which the active site pyruvoyl group is generated from an internal serine residue via an autocatalytic post-translational modification. Two non-identical subunits are generated from the proenzyme in this reaction, and the pyruvate is formed at the N-terminus of the alpha chain, which is derived from the carboxyl end of the proenzyme. The autoendoproteolytic cleavage occurs by a canonical serine protease mechanism, in which the side chain hydroxyl group of the serine supplies its oxygen atom to form the C-terminus of the beta chain, while the remainder of the serine residue undergoes an oxidative deamination to produce ammonia and the pyruvoyl prosthetic group on the alpha chain. During this reaction, the Ser that is part of the protease active site of the proenzyme becomes the pyruvoyl prosthetic group, which constitutes an essential element of the active site of the mature decarboxylase.

The protein localises to the cell membrane. It catalyses the reaction a 1,2-diacyl-sn-glycero-3-phospho-L-serine + H(+) = a 1,2-diacyl-sn-glycero-3-phosphoethanolamine + CO2. It functions in the pathway phospholipid metabolism; phosphatidylethanolamine biosynthesis; phosphatidylethanolamine from CDP-diacylglycerol: step 2/2. In terms of biological role, catalyzes the formation of phosphatidylethanolamine (PtdEtn) from phosphatidylserine (PtdSer). The polypeptide is Phosphatidylserine decarboxylase proenzyme (Wigglesworthia glossinidia brevipalpis).